Reading from the N-terminus, the 282-residue chain is Transformer-2 protein homolog alpha (282 aa).

The segment at 1-118 is disordered; the sequence is MSDVEENNFE…TGSRANPDPN (118 aa). N-acetylserine is present on S2. Phosphoserine occurs at positions 2 and 14. T24 bears the Phosphothreonine mark. Positions 51–84 are enriched in basic residues; it reads RSRSKSRSRSRRHSHRRYTRSRSHSHSHRRRSRS. A phosphoserine mark is found at S82, S84, and S86. At T88 the chain carries Phosphothreonine. Over residues 92–110 the composition is skewed to basic residues; it reads RRRRSRSHSPMSNRRRHTG. Phosphoserine is present on residues S96 and S98. The RRM domain maps to 119-197; the sequence is TCLGVFGLSL…RRIRVDYSIT (79 aa). A Glycyl lysine isopeptide (Lys-Gly) (interchain with G-Cter in SUMO2) cross-link involves residue K198. A linker region spans residues 198 to 225; sequence KRAHTPTPGIYMGRPTHSGGGGGGGGGG. 2 disordered regions span residues 201-245 and 260-282; these read HTPT…YDRG and SPSP…PRRY. Residues T202 and T204 each carry the phosphothreonine modification. Positions 215–230 are enriched in gly residues; sequence SGGGGGGGGGGGGGGG. R232 is modified (omega-N-methylarginine). Over residues 232 to 245 the composition is skewed to basic and acidic residues; sequence RRRDSYYDRGYDRG. S236 carries the phosphoserine modification. Residues 268-282 are compositionally biased toward basic residues; sequence YRSRSRSRSYSPRRY.

The protein belongs to the splicing factor SR family. Binds to A3 enhancer proteins SRp75, SRp55, SRp40 and SRp30. Interacts with ILDR1 (via C-terminus) and ILDR2. Phosphorylated in the RS domains.

It is found in the nucleus. Sequence-specific RNA-binding protein which participates in the control of pre-mRNA splicing. The protein is Transformer-2 protein homolog alpha of Homo sapiens (Human).